The following is an 81-amino-acid chain: Apolipoprotein C-I, acidic form (81 aa).

A signal peptide spans Met-1 to Gly-24.

Belongs to the apolipoprotein C1 family.

The protein localises to the secreted. This Macaca fascicularis (Crab-eating macaque) protein is Apolipoprotein C-I, acidic form (APOC1A).